A 51-amino-acid chain; its full sequence is Non-specific lipid-transfer protein (51 aa).

It belongs to the plant LTP family.

Its function is as follows. Plant non-specific lipid-transfer proteins transfer phospholipids as well as galactolipids across membranes. May play a role in wax or cutin deposition in the cell walls of expanding epidermal cells and certain secretory tissues. The sequence is that of Non-specific lipid-transfer protein from Lycium barbarum (Barbary matrimony-vine).